We begin with the raw amino-acid sequence, 278 residues long: MAIRKYKPTTPGRRGSSVADFVEITRTTPEKSLTRPLPKKGGRNNQGRITTRHQGGGHKRAYRLIDFRRYDKDGVPAKVAHIEYDPNRTARIALLHYVDGEKRYIIAPKDLTQGTRVESGPNADIKPGNNLPLRNIPVGTTIHCVELRPGGGAKIARSAGNSAQLVAREGSRATLRMPSGEMRFVDVRCRATVGEVGNAEQSNINWGKAGRMRWKGKRPTVRGVVMNPVDHPHGGGEGKTSGGRHPVSPWGQPEGRTRKRKASDSQIIRRRKTGKNKR.

Disordered stretches follow at residues Thr28 to His58 and Gly223 to Arg278. Residues Arg43–His53 show a composition bias toward polar residues. Over residues Ile268–Arg278 the composition is skewed to basic residues.

Belongs to the universal ribosomal protein uL2 family. As to quaternary structure, part of the 50S ribosomal subunit. Forms a bridge to the 30S subunit in the 70S ribosome.

One of the primary rRNA binding proteins. Required for association of the 30S and 50S subunits to form the 70S ribosome, for tRNA binding and peptide bond formation. It has been suggested to have peptidyltransferase activity; this is somewhat controversial. Makes several contacts with the 16S rRNA in the 70S ribosome. In Nocardioides sp. (strain ATCC BAA-499 / JS614), this protein is Large ribosomal subunit protein uL2.